Consider the following 500-residue polypeptide: NAD(P)H-quinone oxidoreductase chain 4, chloroplastic (500 aa).

Transmembrane regions (helical) follow at residues 4-24, 35-55, 87-107, 111-131, 134-154, 167-187, 211-231, 242-262, 274-294, 313-333, 334-354, 386-406, 417-437, and 462-482; these read FPWL…IFFL, YTIA…CYHF, LGSI…AWPV, SQLF…LFSS, LLLF…LLSM, FILY…GMGL, ILLY…IPLH, HYST…YGLI, YLFS…AALT, MGFI…GAIL, QILS…TACD, LALP…GLIT, LITF…LSML, and LFLL…PDFV.

Belongs to the complex I subunit 4 family.

It localises to the plastid. The protein localises to the chloroplast thylakoid membrane. It catalyses the reaction a plastoquinone + NADH + (n+1) H(+)(in) = a plastoquinol + NAD(+) + n H(+)(out). The catalysed reaction is a plastoquinone + NADPH + (n+1) H(+)(in) = a plastoquinol + NADP(+) + n H(+)(out). The sequence is that of NAD(P)H-quinone oxidoreductase chain 4, chloroplastic from Saccharum hybrid (Sugarcane).